The chain runs to 395 residues: Putative 8-amino-7-oxononanoate synthase (395 aa).

Arginine 23 is a substrate binding site. 110-111 is a binding site for pyridoxal 5'-phosphate; it reads GF. Histidine 135 serves as a coordination point for substrate. Pyridoxal 5'-phosphate contacts are provided by residues serine 182, 207–210, and 239–242; these read DEAH and TFSK. Lysine 242 is modified (N6-(pyridoxal phosphate)lysine). Residue threonine 356 participates in substrate binding.

This sequence belongs to the class-II pyridoxal-phosphate-dependent aminotransferase family. BioF subfamily. In terms of assembly, homodimer. It depends on pyridoxal 5'-phosphate as a cofactor.

It carries out the reaction 6-carboxyhexanoyl-[ACP] + L-alanine + H(+) = (8S)-8-amino-7-oxononanoate + holo-[ACP] + CO2. Its pathway is cofactor biosynthesis; biotin biosynthesis. Its function is as follows. Catalyzes the decarboxylative condensation of pimeloyl-[acyl-carrier protein] and L-alanine to produce 8-amino-7-oxononanoate (AON), [acyl-carrier protein], and carbon dioxide. This chain is Putative 8-amino-7-oxononanoate synthase (bioF), found in Bacillus anthracis.